The following is a 176-amino-acid chain: Large ribosomal subunit protein uL6 (176 aa).

It belongs to the universal ribosomal protein uL6 family. Part of the 50S ribosomal subunit.

Functionally, this protein binds to the 23S rRNA, and is important in its secondary structure. It is located near the subunit interface in the base of the L7/L12 stalk, and near the tRNA binding site of the peptidyltransferase center. This Paraburkholderia xenovorans (strain LB400) protein is Large ribosomal subunit protein uL6.